Reading from the N-terminus, the 66-residue chain is MFFSQVLRSSARAAPIKRYTGGRIGESWVITEGRRLIPEIFQWSAVLSVCLGWPGAVYFFSKARKA.

The N-terminal 8 residues, 1 to 8 (MFFSQVLR), are a transit peptide targeting the mitochondrion. At 9–27 (SSARAAPIKRYTGGRIGES) the chain is on the mitochondrial matrix side. Residues 28 to 64 (WVITEGRRLIPEIFQWSAVLSVCLGWPGAVYFFSKAR) traverse the membrane as a helical segment. Over 65-66 (KA) the chain is Mitochondrial intermembrane.

This sequence belongs to the fungal cytochrome c oxidase subunit 26 family. Component of the cytochrome c oxidase (complex IV, CIV), a multisubunit enzyme composed of 12 subunits. The complex is composed of a catalytic core of 3 subunits COX1, COX2 and COX3, encoded in the mitochondrial DNA, and 9 supernumerary subunits COX4, COX5A (or COX5B), COX6, COX7, COX8, COX9, COX12, COX13 and COX26, which are encoded in the nuclear genome. The complex exists as a monomer or a dimer and forms supercomplexes (SCs) in the inner mitochondrial membrane with a dimer of ubiquinol-cytochrome c oxidoreductase (cytochrome b-c1 complex, complex III, CIII), resulting in 2 different assemblies (supercomplexes III(2)IV and III(2)IV(2)).

The protein resides in the mitochondrion inner membrane. In terms of biological role, component of the cytochrome c oxidase, the last enzyme in the mitochondrial electron transport chain which drives oxidative phosphorylation. The respiratory chain contains 3 multisubunit complexes succinate dehydrogenase (complex II, CII), ubiquinol-cytochrome c oxidoreductase (cytochrome b-c1 complex, complex III, CIII) and cytochrome c oxidase (complex IV, CIV), that cooperate to transfer electrons derived from NADH and succinate to molecular oxygen, creating an electrochemical gradient over the inner membrane that drives transmembrane transport and the ATP synthase. Cytochrome c oxidase is the component of the respiratory chain that catalyzes the reduction of oxygen to water. Electrons originating from reduced cytochrome c in the intermembrane space (IMS) are transferred via the dinuclear copper A center (CU(A)) of COX2 and heme A of COX1 to the active site in COX1, a binuclear center (BNC) formed by heme A3 and copper B (CU(B)). The BNC reduces molecular oxygen to 2 water molecules using 4 electrons from cytochrome c in the IMS and 4 protons from the mitochondrial matrix. The sequence is that of Cytochrome c oxidase subunit 26, mitochondrial (COX26) from Saccharomyces cerevisiae (strain ATCC 204508 / S288c) (Baker's yeast).